Consider the following 222-residue polypeptide: N-(5'-phosphoribosyl)anthranilate isomerase (222 aa).

It belongs to the TrpF family.

It carries out the reaction N-(5-phospho-beta-D-ribosyl)anthranilate = 1-(2-carboxyphenylamino)-1-deoxy-D-ribulose 5-phosphate. The protein operates within amino-acid biosynthesis; L-tryptophan biosynthesis; L-tryptophan from chorismate: step 3/5. In Rhizobium etli (strain CIAT 652), this protein is N-(5'-phosphoribosyl)anthranilate isomerase.